The primary structure comprises 463 residues: Membrane-bound lytic murein transglycosylase F (463 aa).

Positions 1–33 (MQSQDYKKRLKLQIIIILSIAVMSCGVPNVPTA) are cleaved as a signal peptide. The non-LT domain stretch occupies residues 34-272 (LSSLLERESI…VLEDKYFGHI (239 aa)). The segment at 273 to 463 (RQFDYVDSRA…LVWLDEQGKI (191 aa)) is LT domain. Glu317 is a catalytic residue.

In the N-terminal section; belongs to the bacterial solute-binding protein 3 family. This sequence in the C-terminal section; belongs to the transglycosylase Slt family.

It localises to the cell outer membrane. The enzyme catalyses Exolytic cleavage of the (1-&gt;4)-beta-glycosidic linkage between N-acetylmuramic acid (MurNAc) and N-acetylglucosamine (GlcNAc) residues in peptidoglycan, from either the reducing or the non-reducing ends of the peptidoglycan chains, with concomitant formation of a 1,6-anhydrobond in the MurNAc residue.. Murein-degrading enzyme that degrades murein glycan strands and insoluble, high-molecular weight murein sacculi, with the concomitant formation of a 1,6-anhydromuramoyl product. Lytic transglycosylases (LTs) play an integral role in the metabolism of the peptidoglycan (PG) sacculus. Their lytic action creates space within the PG sacculus to allow for its expansion as well as for the insertion of various structures such as secretion systems and flagella. This chain is Membrane-bound lytic murein transglycosylase F, found in Alteromonas mediterranea (strain DSM 17117 / CIP 110805 / LMG 28347 / Deep ecotype).